Reading from the N-terminus, the 157-residue chain is ATP synthase subunit b', chloroplastic (157 aa).

The helical transmembrane segment at L26–Y43 threads the bilayer.

The protein belongs to the ATPase B chain family. In terms of assembly, F-type ATPases have 2 components, F(1) - the catalytic core - and F(0) - the membrane proton channel. F(1) has five subunits: alpha(3), beta(3), gamma(1), delta(1), epsilon(1). F(0) has four main subunits: a(1), b(1), b'(1) and c(10-14). The alpha and beta chains form an alternating ring which encloses part of the gamma chain. F(1) is attached to F(0) by a central stalk formed by the gamma and epsilon chains, while a peripheral stalk is formed by the delta, b and b' chains.

The protein localises to the plastid. The protein resides in the chloroplast thylakoid membrane. Its function is as follows. F(1)F(0) ATP synthase produces ATP from ADP in the presence of a proton or sodium gradient. F-type ATPases consist of two structural domains, F(1) containing the extramembraneous catalytic core and F(0) containing the membrane proton channel, linked together by a central stalk and a peripheral stalk. During catalysis, ATP synthesis in the catalytic domain of F(1) is coupled via a rotary mechanism of the central stalk subunits to proton translocation. In terms of biological role, component of the F(0) channel, it forms part of the peripheral stalk, linking F(1) to F(0). The b'-subunit is a diverged and duplicated form of b found in plants and photosynthetic bacteria. The protein is ATP synthase subunit b', chloroplastic of Cyanidium caldarium (Red alga).